We begin with the raw amino-acid sequence, 353 residues long: Phospho-furanose lactonase (353 aa).

Zn(2+)-binding residues include histidine 25, histidine 27, lysine 153, histidine 186, and histidine 214. Residue lysine 153 is modified to N6-carboxylysine. 244–245 (KY) is a binding site for substrate. Aspartate 272 is a binding site for Zn(2+). 275 to 278 (RILY) contributes to the substrate binding site.

This sequence belongs to the metallo-dependent hydrolases superfamily. Phosphotriesterase family. Zn(2+) is required as a cofactor.

The catalysed reaction is a 1,4-lactone + H2O = a 4-hydroxyacid + H(+). It carries out the reaction D-xylono-1,4-lactone 5-phosphate + H2O = 5-phospho-D-xylonate + H(+). The enzyme catalyses L-arabino-1,4-lactone 5-phosphate + H2O = 5-phospho-L-arabinonate + H(+). Catalyzes the hydrolysis of D-xylono-1,4-lactone-5-phosphate and L-arabino-1,4-lactone-5-phosphate. Also able to hydrolyze carboxy 1,4-lactones. This Mycoplasmopsis agalactiae (strain NCTC 10123 / CIP 59.7 / PG2) (Mycoplasma agalactiae) protein is Phospho-furanose lactonase.